A 525-amino-acid polypeptide reads, in one-letter code: Signal recognition particle protein (525 aa).

GTP contacts are provided by residues 107 to 114 (GLQGSGKT), 196 to 200 (DTAGR), and 254 to 257 (TKLD). The tract at residues 437–525 (GMGIPGIGRK…LSKLKFPGKK (89 aa)) is disordered. The span at 447–467 (SATRKSKGAKGKSGKKSKKGT) shows a compositional bias: basic residues. The span at 480-497 (GVPGMPGLAGLPGGLPDL) shows a compositional bias: low complexity.

The protein belongs to the GTP-binding SRP family. SRP54 subfamily. In terms of assembly, part of the signal recognition particle protein translocation system, which is composed of SRP and FtsY.

It localises to the cytoplasm. The enzyme catalyses GTP + H2O = GDP + phosphate + H(+). In terms of biological role, involved in targeting and insertion of nascent membrane proteins into the cytoplasmic membrane. Binds to the hydrophobic signal sequence of the ribosome-nascent chain (RNC) as it emerges from the ribosomes. The SRP-RNC complex is then targeted to the cytoplasmic membrane where it interacts with the SRP receptor FtsY. This is Signal recognition particle protein from Mycobacterium bovis (strain ATCC BAA-935 / AF2122/97).